Here is a 557-residue protein sequence, read N- to C-terminus: Carboxypeptidase Y homolog A (557 aa).

The first 17 residues, 1-17, serve as a signal peptide directing secretion; it reads MRVLPAAMLVGAATAAV. Residues 18 to 138 constitute a propeptide that is removed on maturation; that stretch reads PPFQQVLGGN…KLEAYDLRVK (121 aa). Disulfide bonds link Cys-193-Cys-433, Cys-327-Cys-341, Cys-351-Cys-374, Cys-358-Cys-367, and Cys-396-Cys-403. Asn-224 carries N-linked (GlcNAc...) asparagine glycosylation. Residue Ser-280 is part of the active site. The active site involves Asp-472. Residue Asn-523 is glycosylated (N-linked (GlcNAc...) asparagine). His-534 is an active-site residue.

This sequence belongs to the peptidase S10 family.

Its subcellular location is the vacuole. It catalyses the reaction Release of a C-terminal amino acid with broad specificity.. Vacuolar carboxypeptidase involved in degradation of small peptides. Digests preferentially peptides containing an aliphatic or hydrophobic residue in P1' position, as well as methionine, leucine or phenylalanine in P1 position of ester substrate. The sequence is that of Carboxypeptidase Y homolog A (cpyA) from Aspergillus niger (strain ATCC MYA-4892 / CBS 513.88 / FGSC A1513).